The primary structure comprises 287 residues: Formamidopyrimidine-DNA glycosylase (287 aa).

The active-site Schiff-base intermediate with DNA is Pro-2. Residue Glu-3 is the Proton donor of the active site. The active-site Proton donor; for beta-elimination activity is the Lys-58. DNA is bound by residues His-104, Arg-123, and Arg-166. The FPG-type zinc finger occupies 251 to 287 (RTYDREGQPCRNDGCRGVIGREVQAGRSTFYCPVCQR). The active-site Proton donor; for delta-elimination activity is the Arg-277.

Belongs to the FPG family. As to quaternary structure, monomer. Zn(2+) is required as a cofactor.

The catalysed reaction is Hydrolysis of DNA containing ring-opened 7-methylguanine residues, releasing 2,6-diamino-4-hydroxy-5-(N-methyl)formamidopyrimidine.. It carries out the reaction 2'-deoxyribonucleotide-(2'-deoxyribose 5'-phosphate)-2'-deoxyribonucleotide-DNA = a 3'-end 2'-deoxyribonucleotide-(2,3-dehydro-2,3-deoxyribose 5'-phosphate)-DNA + a 5'-end 5'-phospho-2'-deoxyribonucleoside-DNA + H(+). Functionally, involved in base excision repair of DNA damaged by oxidation or by mutagenic agents. Acts as a DNA glycosylase that recognizes and removes damaged bases. Has a preference for oxidized purines, such as 7,8-dihydro-8-oxoguanine (8-oxoG). Has AP (apurinic/apyrimidinic) lyase activity and introduces nicks in the DNA strand. Cleaves the DNA backbone by beta-delta elimination to generate a single-strand break at the site of the removed base with both 3'- and 5'-phosphates. The polypeptide is Formamidopyrimidine-DNA glycosylase (Phenylobacterium zucineum (strain HLK1)).